The chain runs to 181 residues: Ribonuclease M5 (181 aa).

The 84-residue stretch at 3–86 folds into the Toprim domain; the sequence is KEVIVVEGRD…AYISQEEGTK (84 aa). Residues E9, D55, and D57 each coordinate Mg(2+).

This sequence belongs to the ribonuclease M5 family. It depends on Mg(2+) as a cofactor.

Its subcellular location is the cytoplasm. It catalyses the reaction Endonucleolytic cleavage of RNA, removing 21 and 42 nucleotides, respectively, from the 5'- and 3'-termini of a 5S-rRNA precursor.. Required for correct processing of both the 5' and 3' ends of 5S rRNA precursor. Cleaves both sides of a double-stranded region yielding mature 5S rRNA in one step. The chain is Ribonuclease M5 from Clostridium botulinum (strain Hall / ATCC 3502 / NCTC 13319 / Type A).